The primary structure comprises 236 residues: MEQMHSLESSLPPEQPPTKQAIESLNLELSQEFKLAANAVTRLYRVANEKNSLTKHQGYLTCLDDILCALDSNVTADELRAWCYKRRNDILSNSQDKSLNPVKERERKLNKFSENQHRENEAHKEPFEKDSAVKYNFSFNESNGDLSNINENIAPKFRLSMPPLSVEHPPRNASRIKSWKARTINHGRGDTRNLNDITGLGHERERDRENTHYEKKPKLDSDSEVDIRSFRQDMDL.

Positions 186–236 are disordered; the sequence is HGRGDTRNLNDITGLGHERERDRENTHYEKKPKLDSDSEVDIRSFRQDMDL. The span at 201–236 shows a compositional bias: basic and acidic residues; it reads GHERERDRENTHYEKKPKLDSDSEVDIRSFRQDMDL. Ser-221 is modified (phosphoserine).

This is an uncharacterized protein from Saccharomyces cerevisiae (strain ATCC 204508 / S288c) (Baker's yeast).